Here is a 61-residue protein sequence, read N- to C-terminus: Peroxidase 1 (61 aa).

The tract at residues 1–32 (DNTAKEKDSPANLSLRTCAAGDNAEQPLDPSR) is disordered. Asn-12 carries N-linked (GlcNAc...) asparagine glycosylation. The Ca(2+) site is built by Asp-29, Ser-31, and Asp-36.

Belongs to the peroxidase family. Classical plant (class III) peroxidase subfamily. The cofactor is Ca(2+). Requires heme b as cofactor.

It is found in the secreted. It catalyses the reaction 2 a phenolic donor + H2O2 = 2 a phenolic radical donor + 2 H2O. Removal of H(2)O(2), oxidation of toxic reductants, biosynthesis and degradation of lignin, suberization, auxin catabolism, response to environmental stresses such as wounding, pathogen attack and oxidative stress. These functions might be dependent on each isozyme/isoform in each plant tissue. In Vitis rotundifolia (Muscadine grape), this protein is Peroxidase 1.